We begin with the raw amino-acid sequence, 210 residues long: Probable septum site-determining protein MinC (210 aa).

It belongs to the MinC family. Interacts with MinD and FtsZ.

Its function is as follows. Cell division inhibitor that blocks the formation of polar Z ring septums. Rapidly oscillates between the poles of the cell to destabilize FtsZ filaments that have formed before they mature into polar Z rings. Prevents FtsZ polymerization. In Thermotoga petrophila (strain ATCC BAA-488 / DSM 13995 / JCM 10881 / RKU-1), this protein is Probable septum site-determining protein MinC.